A 127-amino-acid polypeptide reads, in one-letter code: Large ribosomal subunit protein bL19 (127 aa).

The protein belongs to the bacterial ribosomal protein bL19 family.

This protein is located at the 30S-50S ribosomal subunit interface and may play a role in the structure and function of the aminoacyl-tRNA binding site. In Acidovorax ebreus (strain TPSY) (Diaphorobacter sp. (strain TPSY)), this protein is Large ribosomal subunit protein bL19.